Reading from the N-terminus, the 525-residue chain is Protein-serine O-palmitoleoyltransferase porcupine (525 aa).

Transmembrane regions (helical) follow at residues 83-103 (VMQYVAPMLLLCLLCRLLCLL), 125-145 (LIILQITVGYRLLLLLLLAAV), 159-179 (GAQVLAVLTVGSQFLYELLIW), 220-240 (FAYLGYIYSPATCALGPWVSF), 260-280 (LLPNVVICVLAVTVSNCVAPA), 301-318 (VRSSHYFVGMMAQALLVA), 395-415 (SLLHGMDLRIYLVLISLAFLA), 467-487 (NLAFTALAIFHLAYLGVVLLG), and 505-525 (QAGYLSHYIGLGTFVLYLFIS). Histidine 398 is an active-site residue.

The protein belongs to the membrane-bound acyltransferase family. Porcupine subfamily. As to quaternary structure, interacts with wg and Wnt5.

The protein resides in the endoplasmic reticulum membrane. It catalyses the reaction [Wnt protein]-L-serine + (9Z)-hexadecenoyl-CoA = [Wnt protein]-O-(9Z)-hexadecenoyl-L-serine + CoA. Functionally, protein-serine O-palmitoleoyltransferase that acts as a key regulator of the Wnt signaling pathway by mediating the attachment of palmitoleate, a 16-carbon monounsaturated fatty acid (C16:1(9Z)), to Wnt proteins. Serine palmitoleoylation of Wnt proteins is required for efficient binding to frizzled receptors. Also facilitates the glycosylation of Wnt family members, including wg and Wnt5. The cotranslational disulfide bond formation of wg competes with the N-glycosylation. Porc stimulates the post-translational N-glycosylation by anchoring wg at the ER membrane, probably through acylation. The sequence is that of Protein-serine O-palmitoleoyltransferase porcupine from Drosophila melanogaster (Fruit fly).